We begin with the raw amino-acid sequence, 236 residues long: Pyridoxal phosphate homeostasis protein (236 aa).

Lys-36 carries the post-translational modification N6-(pyridoxal phosphate)lysine.

Belongs to the pyridoxal phosphate-binding protein YggS/PROSC family.

Pyridoxal 5'-phosphate (PLP)-binding protein, which is involved in PLP homeostasis. The polypeptide is Pyridoxal phosphate homeostasis protein (Vibrio cholerae serotype O1 (strain ATCC 39315 / El Tor Inaba N16961)).